The chain runs to 157 residues: 3-hydroxyacyl-[acyl-carrier-protein] dehydratase FabZ (157 aa).

His58 is a catalytic residue.

Belongs to the thioester dehydratase family. FabZ subfamily.

It is found in the cytoplasm. It carries out the reaction a (3R)-hydroxyacyl-[ACP] = a (2E)-enoyl-[ACP] + H2O. Involved in unsaturated fatty acids biosynthesis. Catalyzes the dehydration of short chain beta-hydroxyacyl-ACPs and long chain saturated and unsaturated beta-hydroxyacyl-ACPs. The sequence is that of 3-hydroxyacyl-[acyl-carrier-protein] dehydratase FabZ from Rhizorhabdus wittichii (strain DSM 6014 / CCUG 31198 / JCM 15750 / NBRC 105917 / EY 4224 / RW1) (Sphingomonas wittichii).